The primary structure comprises 96 residues: Redox-responsive transcriptional regulator WhiB3 (96 aa).

Positions 22–86 constitute a 4Fe-4S Wbl-type domain; that stretch reads LCRGVDSSMF…GGLSESEREL (65 aa). 4 residues coordinate [4Fe-4S] cluster: Cys-23, Cys-53, Cys-56, and Cys-62.

This sequence belongs to the WhiB family. [4Fe-4S] cluster serves as cofactor. Post-translationally, the Fe-S cluster can be nitrosylated by nitric oxide (NO). In terms of processing, upon Fe-S cluster removal intramolecular disulfide bonds are formed.

The protein resides in the cytoplasm. Functionally, a redox-sensitive transcriptional regulator. Maintains intracellular redox homeostasis by regulating catabolic metabolism and polyketide biosynthesis. Regulates expression of the redox buffer ergothioneine (ERG). In concert with myothiol (MSH), another redox buffer, responds to low pH leading to acid resistance. The apo- but not holo-form probably binds DNA. In Mycolicibacterium smegmatis (strain ATCC 700084 / mc(2)155) (Mycobacterium smegmatis), this protein is Redox-responsive transcriptional regulator WhiB3 (whiB3).